The following is a 197-amino-acid chain: Peptidyl-tRNA hydrolase (197 aa).

Tyr-18 is a tRNA binding site. Residue His-23 is the Proton acceptor of the active site. TRNA is bound by residues Phe-69, Asn-71, and Asn-117.

Belongs to the PTH family. Monomer.

It localises to the cytoplasm. The enzyme catalyses an N-acyl-L-alpha-aminoacyl-tRNA + H2O = an N-acyl-L-amino acid + a tRNA + H(+). Its function is as follows. Hydrolyzes ribosome-free peptidyl-tRNAs (with 1 or more amino acids incorporated), which drop off the ribosome during protein synthesis, or as a result of ribosome stalling. Catalyzes the release of premature peptidyl moieties from peptidyl-tRNA molecules trapped in stalled 50S ribosomal subunits, and thus maintains levels of free tRNAs and 50S ribosomes. This chain is Peptidyl-tRNA hydrolase, found in Psychromonas ingrahamii (strain DSM 17664 / CCUG 51855 / 37).